Here is a 423-residue protein sequence, read N- to C-terminus: Kynureninase (423 aa).

Residues L105, S106, 133–136, D218, H221, and Y243 each bind pyridoxal 5'-phosphate; that span reads FPSD. The residue at position 244 (K244) is an N6-(pyridoxal phosphate)lysine. Pyridoxal 5'-phosphate-binding residues include W273 and N301.

It belongs to the kynureninase family. In terms of assembly, homodimer. It depends on pyridoxal 5'-phosphate as a cofactor.

The catalysed reaction is L-kynurenine + H2O = anthranilate + L-alanine + H(+). The enzyme catalyses 3-hydroxy-L-kynurenine + H2O = 3-hydroxyanthranilate + L-alanine + H(+). The protein operates within amino-acid degradation; L-kynurenine degradation; L-alanine and anthranilate from L-kynurenine: step 1/1. It functions in the pathway cofactor biosynthesis; NAD(+) biosynthesis; quinolinate from L-kynurenine: step 2/3. Catalyzes the cleavage of L-kynurenine (L-Kyn) and L-3-hydroxykynurenine (L-3OHKyn) into anthranilic acid (AA) and 3-hydroxyanthranilic acid (3-OHAA), respectively. The sequence is that of Kynureninase from Xanthomonas euvesicatoria pv. vesicatoria (strain 85-10) (Xanthomonas campestris pv. vesicatoria).